Reading from the N-terminus, the 473-residue chain is Glutamine synthetase (473 aa).

Residues 18 to 102 (NNIKWVDLQF…VLTKVFWGGG (85 aa)) enclose the GS beta-grasp domain. One can recognise a GS catalytic domain in the interval 110–473 (PRGIAEEAEK…PMEIYQYLDS (364 aa)). Residues Glu133 and Glu135 each coordinate Mg(2+). ATP is bound at residue Glu207. Glu212 and Glu220 together coordinate Mg(2+). Residues 264–265 (NG) and Gly265 each bind L-glutamate. A Mg(2+)-binding site is contributed by His269. ATP is bound by residues 271 to 273 (HFS) and Ser273. L-glutamate contacts are provided by Arg324, Glu330, and Arg342. Positions 342, 347, and 357 each coordinate ATP. Glu362 contacts Mg(2+). Arg364 is a binding site for L-glutamate.

The protein belongs to the glutamine synthetase family. Oligomer of 12 subunits arranged in the form of two hexagons. Mg(2+) serves as cofactor. It depends on Mn(2+) as a cofactor.

The protein localises to the cytoplasm. It catalyses the reaction L-glutamate + NH4(+) + ATP = L-glutamine + ADP + phosphate + H(+). Strongly inhibited by glycine and L-alanine. AMP at 10 mM displays a very weak inhibitory effect. The activity of this enzyme is not controlled by adenylation. In terms of biological role, probably involved in nitrogen metabolism via ammonium assimilation. Catalyzes the ATP-dependent biosynthesis of glutamine from glutamate and ammonia. This Sulfolobus acidocaldarius (strain ATCC 33909 / DSM 639 / JCM 8929 / NBRC 15157 / NCIMB 11770) protein is Glutamine synthetase.